Here is a 154-residue protein sequence, read N- to C-terminus: 17 kDa surface antigen (154 aa).

The signal sequence occupies residues Met1–Ala19. Cys20 is lipidated: N-palmitoyl cysteine. A lipid anchor (S-diacylglycerol cysteine) is attached at Cys20.

This sequence belongs to the rickettsiale 17 kDa surface antigen family.

It is found in the cell outer membrane. The polypeptide is 17 kDa surface antigen (omp) (Rickettsia australis).